Here is a 94-residue protein sequence, read N- to C-terminus: Large ribosomal subunit protein bL25 (94 aa).

The segment at M1–L20 is disordered.

Belongs to the bacterial ribosomal protein bL25 family. Part of the 50S ribosomal subunit; part of the 5S rRNA/L5/L18/L25 subcomplex. Contacts the 5S rRNA. Binds to the 5S rRNA independently of L5 and L18.

In terms of biological role, this is one of the proteins that binds to the 5S RNA in the ribosome where it forms part of the central protuberance. The chain is Large ribosomal subunit protein bL25 from Pasteurella multocida (strain Pm70).